We begin with the raw amino-acid sequence, 689 residues long: DNA ligase (689 aa).

NAD(+) contacts are provided by residues 40 to 44, 89 to 90, and Glu-121; these read DSEYD and SL. The N6-AMP-lysine intermediate role is filled by Lys-123. NAD(+) contacts are provided by Arg-144, Glu-179, Lys-295, and Lys-319. Residues Cys-413, Cys-416, Cys-431, and Cys-437 each coordinate Zn(2+). Residues 610–689 form the BRCT domain; that stretch reads REQSSLTDKI…EEWLTLIKNV (80 aa).

Belongs to the NAD-dependent DNA ligase family. LigA subfamily. It depends on Mg(2+) as a cofactor. The cofactor is Mn(2+).

It catalyses the reaction NAD(+) + (deoxyribonucleotide)n-3'-hydroxyl + 5'-phospho-(deoxyribonucleotide)m = (deoxyribonucleotide)n+m + AMP + beta-nicotinamide D-nucleotide.. DNA ligase that catalyzes the formation of phosphodiester linkages between 5'-phosphoryl and 3'-hydroxyl groups in double-stranded DNA using NAD as a coenzyme and as the energy source for the reaction. It is essential for DNA replication and repair of damaged DNA. This is DNA ligase from Rickettsia massiliae (strain Mtu5).